The following is a 620-amino-acid chain: Chaperone protein HtpG (620 aa).

An a; substrate-binding region spans residues 1–334; sequence MTTTDTAPQT…SEDLPLNLSR (334 aa). Residues 335 to 548 are b; sequence EMLQNNPQLV…GQGPDRALER (214 aa). The tract at residues 549–620 is c; that stretch reads MLAQQNRGGA…RINRLVLRAL (72 aa).

This sequence belongs to the heat shock protein 90 family. In terms of assembly, homodimer.

The protein localises to the cytoplasm. Molecular chaperone. Has ATPase activity. This is Chaperone protein HtpG from Rhodopseudomonas palustris (strain BisA53).